Reading from the N-terminus, the 1668-residue chain is DNA polymerase (1668 aa).

2 DOD-type homing endonuclease domains span residues 739–872 (LLGY…SLGV) and 1191–1330 (LIGL…LVGV).

It belongs to the DNA polymerase type-B family. Post-translationally, this protein undergoes a protein self splicing that involves a post-translational excision of the intervening region (intein) followed by peptide ligation.

It carries out the reaction DNA(n) + a 2'-deoxyribonucleoside 5'-triphosphate = DNA(n+1) + diphosphate. In addition to polymerase activity, this DNA polymerase exhibits 3' to 5' exonuclease activity. Functionally, PI-ThyI and PI-ThyII are endonucleases. PI-ThyI cleaves the inteinless sequence of the Thy DNA pol gene. It requires a 21-bp minimal recognition sequence. This is DNA polymerase (pol) from Thermococcus hydrothermalis.